A 119-amino-acid polypeptide reads, in one-letter code: Phosphoribosyl-AMP cyclohydrolase (119 aa).

Mg(2+) is bound at residue Asp77. Residue Cys78 coordinates Zn(2+). Mg(2+) contacts are provided by Asp79 and Asp81. Zn(2+) contacts are provided by Cys94 and Cys101.

Belongs to the PRA-CH family. Homodimer. Requires Mg(2+) as cofactor. The cofactor is Zn(2+).

It localises to the cytoplasm. It carries out the reaction 1-(5-phospho-beta-D-ribosyl)-5'-AMP + H2O = 1-(5-phospho-beta-D-ribosyl)-5-[(5-phospho-beta-D-ribosylamino)methylideneamino]imidazole-4-carboxamide. The protein operates within amino-acid biosynthesis; L-histidine biosynthesis; L-histidine from 5-phospho-alpha-D-ribose 1-diphosphate: step 3/9. Functionally, catalyzes the hydrolysis of the adenine ring of phosphoribosyl-AMP. This is Phosphoribosyl-AMP cyclohydrolase from Ruegeria pomeroyi (strain ATCC 700808 / DSM 15171 / DSS-3) (Silicibacter pomeroyi).